The primary structure comprises 152 residues: UPF0756 membrane protein EF_1246 (152 aa).

Helical transmembrane passes span 4–24 (WLFL…SLLI), 52–72 (LGVT…QIGL), 85–105 (WLGI…VGLI), and 115–135 (LVFG…GPII).

The protein belongs to the UPF0756 family.

The protein localises to the cell membrane. This Enterococcus faecalis (strain ATCC 700802 / V583) protein is UPF0756 membrane protein EF_1246.